The chain runs to 555 residues: Glutamine--tRNA ligase (555 aa).

The short motif at 34–44 (PEPNGYLHIGH) is the 'HIGH' region element. ATP contacts are provided by residues 35–37 (EPN) and 41–47 (HIGHAKS). Positions 67 and 212 each coordinate L-glutamine. ATP contacts are provided by residues T231, 261 to 262 (RL), and 269 to 271 (MSK). The 'KMSKS' region signature appears at 268–272 (VMSKR). Residues 317–324 (TKQDNTIE) form an interaction with tRNA region.

The protein belongs to the class-I aminoacyl-tRNA synthetase family. Monomer.

The protein resides in the cytoplasm. It carries out the reaction tRNA(Gln) + L-glutamine + ATP = L-glutaminyl-tRNA(Gln) + AMP + diphosphate. This chain is Glutamine--tRNA ligase, found in Salmonella paratyphi B (strain ATCC BAA-1250 / SPB7).